Consider the following 199-residue polypeptide: ATP-dependent Clp protease proteolytic subunit (199 aa).

The Nucleophile role is filled by S98. The active site involves H123.

This sequence belongs to the peptidase S14 family. Fourteen ClpP subunits assemble into 2 heptameric rings which stack back to back to give a disk-like structure with a central cavity, resembling the structure of eukaryotic proteasomes.

It localises to the cytoplasm. It carries out the reaction Hydrolysis of proteins to small peptides in the presence of ATP and magnesium. alpha-casein is the usual test substrate. In the absence of ATP, only oligopeptides shorter than five residues are hydrolyzed (such as succinyl-Leu-Tyr-|-NHMec, and Leu-Tyr-Leu-|-Tyr-Trp, in which cleavage of the -Tyr-|-Leu- and -Tyr-|-Trp bonds also occurs).. Its function is as follows. Cleaves peptides in various proteins in a process that requires ATP hydrolysis. Has a chymotrypsin-like activity. Plays a major role in the degradation of misfolded proteins. This is ATP-dependent Clp protease proteolytic subunit from Ehrlichia chaffeensis (strain ATCC CRL-10679 / Arkansas).